A 293-amino-acid polypeptide reads, in one-letter code: Neugrin (293 aa).

The first 15 residues, 1-15 (MALSLSLFLGGRVRA), serve as a signal peptide directing secretion. Disordered regions lie at residues 25–48 (QGVA…PEER) and 162–211 (PLSA…EKNK). Phosphoserine is present on serine 41. An N-linked (GlcNAc...) asparagine glycan is attached at asparagine 270.

It belongs to the neugrin family. As to quaternary structure, forms a regulatory protein-RNA complex, consisting of RCC1L, NGRN, RPUSD3, RPUSD4, TRUB2, FASTKD2 and 16S mt-rRNA. Interacts with 16S mt-rRNA; this interaction is direct.

The protein resides in the nucleus. It localises to the secreted. The protein localises to the mitochondrion membrane. In terms of biological role, plays an essential role in mitochondrial ribosome biogenesis. As a component of a functional protein-RNA module, consisting of RCC1L, NGRN, RPUSD3, RPUSD4, TRUB2, FASTKD2 and 16S mitochondrial ribosomal RNA (16S mt-rRNA), controls 16S mt-rRNA abundance and is required for intra-mitochondrial translation of core subunits of the oxidative phosphorylation system. The protein is Neugrin (Ngrn) of Rattus norvegicus (Rat).